The following is a 291-amino-acid chain: Acetyl-coenzyme A carboxylase carboxyl transferase subunit beta (291 aa).

The disordered stretch occupies residues 1–23 (MSWLSKLMPSGIRTDNTPSKKRS). The region spanning 28 to 291 (LWEKCSNCGS…LGRQPAPEVA (264 aa)) is the CoA carboxyltransferase N-terminal domain. Zn(2+) is bound by residues Cys-32, Cys-35, Cys-51, and Cys-54. The segment at 32 to 54 (CSNCGSALYRPELEENLEVCPKC) adopts a C4-type zinc-finger fold.

This sequence belongs to the AccD/PCCB family. In terms of assembly, acetyl-CoA carboxylase is a heterohexamer composed of biotin carboxyl carrier protein (AccB), biotin carboxylase (AccC) and two subunits each of ACCase subunit alpha (AccA) and ACCase subunit beta (AccD). The cofactor is Zn(2+).

The protein resides in the cytoplasm. The enzyme catalyses N(6)-carboxybiotinyl-L-lysyl-[protein] + acetyl-CoA = N(6)-biotinyl-L-lysyl-[protein] + malonyl-CoA. The protein operates within lipid metabolism; malonyl-CoA biosynthesis; malonyl-CoA from acetyl-CoA: step 1/1. Functionally, component of the acetyl coenzyme A carboxylase (ACC) complex. Biotin carboxylase (BC) catalyzes the carboxylation of biotin on its carrier protein (BCCP) and then the CO(2) group is transferred by the transcarboxylase to acetyl-CoA to form malonyl-CoA. This chain is Acetyl-coenzyme A carboxylase carboxyl transferase subunit beta, found in Stenotrophomonas maltophilia (strain R551-3).